A 152-amino-acid polypeptide reads, in one-letter code: Large ribosomal subunit protein bL9 (152 aa).

This sequence belongs to the bacterial ribosomal protein bL9 family.

Binds to the 23S rRNA. The sequence is that of Large ribosomal subunit protein bL9 from Mycobacterium leprae (strain Br4923).